The primary structure comprises 198 residues: MKQPSALSALVEALRVLPGVGPKSAQRMAYHLMQHDREGAERLGRSLLFATEHLQHCEKCNTFTEAQICEVCSDDERDPTLLCVVETPADQIMLEQTMTYRGLYFVLMGRLSPLDGIGPKEIHFDRLVRRASDGVVKEVVLATNFTNEGEATAHYLGQTLKARGLAVTRLARGVPVGGELEYVDAGTIARAMLDRRTM.

The C4-type zinc finger occupies 57-72; it reads CEKCNTFTEAQICEVC. The Toprim domain occupies 80 to 175; it reads TLLCVVETPA…AVTRLARGVP (96 aa).

It belongs to the RecR family.

Its function is as follows. May play a role in DNA repair. It seems to be involved in an RecBC-independent recombinational process of DNA repair. It may act with RecF and RecO. This chain is Recombination protein RecR, found in Burkholderia ambifaria (strain MC40-6).